The sequence spans 300 residues: Probable alpha-L-glutamate ligase (300 aa).

Residues 104-287 (LQLLARQGID…IAGRMIEYIE (184 aa)) form the ATP-grasp domain. ATP contacts are provided by residues K141, 178–179 (EY), D187, and 211–213 (RSN). The Mg(2+) site is built by D248, E260, and N262. 3 residues coordinate Mn(2+): D248, E260, and N262.

Belongs to the RimK family. Mg(2+) is required as a cofactor. The cofactor is Mn(2+).

This Serratia proteamaculans (strain 568) protein is Probable alpha-L-glutamate ligase.